The sequence spans 524 residues: Translation initiation factor eIF2B subunit delta (524 aa).

Positions 1 to 155 (MAAVAVAVRE…EHTPADDPTL (155 aa)) are disordered. Ala2 bears the N-acetylalanine mark. Composition is skewed to basic and acidic residues over residues 8–20 (VREE…KTEL) and 31–40 (LTQEEKLQLR). A Phosphoserine modification is found at Ser12. Residues 41 to 51 (KEKKQQKKKRK) show a composition bias toward basic residues. Thr86 carries the post-translational modification Phosphothreonine. Over residues 96–121 (SKAELRAERRAKQEAERALKQARKGE) the composition is skewed to basic and acidic residues. The span at 130 to 140 (CPSTAGETTSG) shows a compositional bias: polar residues. Residues 171-180 (RKDYGSKVSL) form a may bind the chemical integrated stress response (ISR) inhibitor ISRIB region.

The protein belongs to the eIF-2B alpha/beta/delta subunits family. In terms of assembly, component of the translation initiation factor 2B (eIF2B) complex which is a heterodecamer of two sets of five different subunits: alpha, beta, gamma, delta and epsilon. Subunits alpha, beta and delta comprise a regulatory subcomplex and subunits epsilon and gamma comprise a catalytic subcomplex. Within the complex, the hexameric regulatory complex resides at the center, with the two heterodimeric catalytic subcomplexes bound on opposite sides.

It localises to the cytoplasm. The protein localises to the cytosol. With respect to regulation, activated by the chemical integrated stress response (ISR) inhibitor ISRIB which stimulates guanine nucleotide exchange factor activity for both phosphorylated and unphosphorylated eIF2. Functionally, acts as a component of the translation initiation factor 2B (eIF2B) complex, which catalyzes the exchange of GDP for GTP on eukaryotic initiation factor 2 (eIF2) gamma subunit. Its guanine nucleotide exchange factor activity is repressed when bound to eIF2 complex phosphorylated on the alpha subunit, thereby limiting the amount of methionyl-initiator methionine tRNA available to the ribosome and consequently global translation is repressed. This chain is Translation initiation factor eIF2B subunit delta (Eif2b4), found in Mus musculus (Mouse).